The chain runs to 64 residues: DNA gyrase inhibitor YacG (64 aa).

Residues Cys9, Cys12, Cys28, and Cys32 each coordinate Zn(2+).

It belongs to the DNA gyrase inhibitor YacG family. In terms of assembly, interacts with GyrB. Zn(2+) is required as a cofactor.

In terms of biological role, inhibits all the catalytic activities of DNA gyrase by preventing its interaction with DNA. Acts by binding directly to the C-terminal domain of GyrB, which probably disrupts DNA binding by the gyrase. This is DNA gyrase inhibitor YacG from Enterobacter sp. (strain 638).